The following is a 166-amino-acid chain: MSNNDQKRDEGYIEKLVQVNRVAKTVKGGRIFTFTALTVVGDGKGRVGFGRGKSREVPAAIQKAMEAARRNMIQVDLNGTTLQYAMKSAHGASKVYMQPASEGTGIIAGGAMRAVLEVAGVQNVLAKCYGSTNPVNVVHATFKGLKAMQSPESIAAKRGKSVQEII.

The S5 DRBM domain occupies 12–75; sequence YIEKLVQVNR…EAARRNMIQV (64 aa).

This sequence belongs to the universal ribosomal protein uS5 family. In terms of assembly, part of the 30S ribosomal subunit. Contacts proteins S4 and S8.

With S4 and S12 plays an important role in translational accuracy. Its function is as follows. Located at the back of the 30S subunit body where it stabilizes the conformation of the head with respect to the body. In Pseudomonas fluorescens (strain ATCC BAA-477 / NRRL B-23932 / Pf-5), this protein is Small ribosomal subunit protein uS5.